The primary structure comprises 55 residues: Large ribosomal subunit protein bL32 (55 aa).

Residues methionine 1 to serine 28 form a disordered region.

The protein belongs to the bacterial ribosomal protein bL32 family.

The sequence is that of Large ribosomal subunit protein bL32 from Serratia proteamaculans (strain 568).